The sequence spans 198 residues: NAD(P)H dehydrogenase (quinone) (198 aa).

One can recognise a Flavodoxin-like domain in the interval 4 to 189 (VLVLYYSMYG…SIARYQGEYV (186 aa)). FMN is bound by residues 10 to 15 (SMYGHI) and 78 to 80 (TRF). Tyrosine 12 contacts NAD(+). Substrate is bound at residue tryptophan 98. FMN is bound by residues 113 to 118 (STGTGG) and histidine 133.

It belongs to the WrbA family. Requires FMN as cofactor.

The catalysed reaction is a quinone + NADH + H(+) = a quinol + NAD(+). The enzyme catalyses a quinone + NADPH + H(+) = a quinol + NADP(+). In Escherichia fergusonii (strain ATCC 35469 / DSM 13698 / CCUG 18766 / IAM 14443 / JCM 21226 / LMG 7866 / NBRC 102419 / NCTC 12128 / CDC 0568-73), this protein is NAD(P)H dehydrogenase (quinone).